The chain runs to 356 residues: Vesicular integral-membrane protein VIP36 (356 aa).

Positions 1 to 44 (MAAEGWIWRWGWGRRCLGRPGLLGPGPGPTTPLFLLLLLGSVTA) are cleaved as a signal peptide. Over 45–322 (DITDGNSEHL…FRSGPLTGWR (278 aa)) the chain is Lumenal. Positions 52 to 276 (EHLKREHSLI…DIISMKLFQL (225 aa)) constitute an L-type lectin-like domain. Ser-96 and Asp-131 together coordinate a carbohydrate. Residues Asp-162, Tyr-164, and Asn-166 each coordinate Ca(2+). A carbohydrate is bound at residue 164–166 (YPN). N-linked (GlcNAc...) asparagine glycosylation occurs at Asn-183. Residue His-190 coordinates a carbohydrate. Asp-193 serves as a coordination point for Ca(2+). Cys-202 and Cys-239 form a disulfide bridge. 260–262 (GDL) is a binding site for a carbohydrate. The helical transmembrane segment at 323–345 (VFLLLLCALLGIVVCAVVGAVVF) threads the bilayer. Residues 346 to 356 (QKRQERNKRFY) are Cytoplasmic-facing.

It depends on Ca(2+) as a cofactor. As to expression, ubiquitous.

The protein localises to the endoplasmic reticulum-Golgi intermediate compartment membrane. It localises to the golgi apparatus membrane. Its subcellular location is the endoplasmic reticulum membrane. In terms of biological role, plays a role as an intracellular lectin in the early secretory pathway. Interacts with N-acetyl-D-galactosamine and high-mannose type glycans and may also bind to O-linked glycans. Involved in the transport and sorting of glycoproteins carrying high mannose-type glycans. The polypeptide is Vesicular integral-membrane protein VIP36 (LMAN2) (Homo sapiens (Human)).